A 252-amino-acid polypeptide reads, in one-letter code: MAGHSKFKNIQHRKGAQDKKRAKVFTKLIREIVTAVKTGSSNIPENNPRLRNALTAARSQNLPKERIDKAINSADDANTENYTEIRYEGYAPNGIAIIVEALTDNKNRTAAEVRSGFTKYGGSLGETGSVNYLFKHCGVIQYPTNIASNEDIFEAAIEAGGDDIVSDEIFHTIYTDIENFSKVLEFLTGKYGIPEDSYIGWIPLNTIIIDDKEKAEKLLKLVEILEESDDVQRVFGNYELSDDVYEIIQGEE.

The interval 1–21 (MAGHSKFKNIQHRKGAQDKKR) is disordered.

The protein belongs to the TACO1 family.

It localises to the cytoplasm. This chain is Probable transcriptional regulatory protein RF_0799, found in Rickettsia felis (strain ATCC VR-1525 / URRWXCal2) (Rickettsia azadi).